The sequence spans 224 residues: UPF0758 protein Bpro_0948 (224 aa).

Positions 102–224 (LFSTPQAVRD…AVSMAELGLL (123 aa)) constitute an MPN domain. Zn(2+) contacts are provided by H173, H175, and D186. The JAMM motif motif lies at 173–186 (HNHPSGAATPSRAD).

It belongs to the UPF0758 family.

The sequence is that of UPF0758 protein Bpro_0948 from Polaromonas sp. (strain JS666 / ATCC BAA-500).